Here is a 299-residue protein sequence, read N- to C-terminus: Acetylglutamate kinase (299 aa).

Substrate contacts are provided by residues 72–73, Arg-94, and Asn-196; that span reads GG.

The protein belongs to the acetylglutamate kinase family. ArgB subfamily.

Its subcellular location is the cytoplasm. It catalyses the reaction N-acetyl-L-glutamate + ATP = N-acetyl-L-glutamyl 5-phosphate + ADP. It participates in amino-acid biosynthesis; L-arginine biosynthesis; N(2)-acetyl-L-ornithine from L-glutamate: step 2/4. Its function is as follows. Catalyzes the ATP-dependent phosphorylation of N-acetyl-L-glutamate. In Burkholderia cenocepacia (strain ATCC BAA-245 / DSM 16553 / LMG 16656 / NCTC 13227 / J2315 / CF5610) (Burkholderia cepacia (strain J2315)), this protein is Acetylglutamate kinase.